A 103-amino-acid chain; its full sequence is Acylphosphatase-2 (103 aa).

Ser2 is subject to N-acetylserine. In terms of domain architecture, Acylphosphatase-like spans 13–103 (SVDYEVFGRV…LDFSGFSTRY (91 aa)). Catalysis depends on residues Arg28 and Asn46.

It belongs to the acylphosphatase family.

The catalysed reaction is an acyl phosphate + H2O = a carboxylate + phosphate + H(+). Its physiological role is not yet clear. The polypeptide is Acylphosphatase-2 (ACYP2) (Gallus gallus (Chicken)).